The sequence spans 98 residues: NADH-ubiquinone oxidoreductase chain 4L (98 aa).

The next 2 membrane-spanning stretches (helical) occupy residues 1–21 and 48–68; these read MTLIHFSFCSAFILGLTGLAL and PLHLTIYLSSMMLYIMLPFAA.

The protein belongs to the complex I subunit 4L family. As to quaternary structure, core subunit of respiratory chain NADH dehydrogenase (Complex I) which is composed of 45 different subunits.

The protein localises to the mitochondrion inner membrane. It catalyses the reaction a ubiquinone + NADH + 5 H(+)(in) = a ubiquinol + NAD(+) + 4 H(+)(out). Core subunit of the mitochondrial membrane respiratory chain NADH dehydrogenase (Complex I) which catalyzes electron transfer from NADH through the respiratory chain, using ubiquinone as an electron acceptor. Part of the enzyme membrane arm which is embedded in the lipid bilayer and involved in proton translocation. This chain is NADH-ubiquinone oxidoreductase chain 4L (mt-nd4l), found in Xenopus laevis (African clawed frog).